Reading from the N-terminus, the 728-residue chain is 1,4-alpha-glucan branching enzyme GlgB (728 aa).

Catalysis depends on Asp-405, which acts as the Nucleophile. Residue Glu-458 is the Proton donor of the active site.

The protein belongs to the glycosyl hydrolase 13 family. GlgB subfamily. As to quaternary structure, monomer.

It catalyses the reaction Transfers a segment of a (1-&gt;4)-alpha-D-glucan chain to a primary hydroxy group in a similar glucan chain.. It participates in glycan biosynthesis; glycogen biosynthesis. In terms of biological role, catalyzes the formation of the alpha-1,6-glucosidic linkages in glycogen by scission of a 1,4-alpha-linked oligosaccharide from growing alpha-1,4-glucan chains and the subsequent attachment of the oligosaccharide to the alpha-1,6 position. This chain is 1,4-alpha-glucan branching enzyme GlgB, found in Escherichia coli O6:H1 (strain CFT073 / ATCC 700928 / UPEC).